A 1038-amino-acid polypeptide reads, in one-letter code: uncharacterized protein (1038 aa).

The segment covering 1-14 (MEENTAQKQSNATG) has biased composition (polar residues). Positions 1–100 (MEENTAQKQS…QSENENYDFS (100 aa)) are disordered. The segment covering 58–71 (NPERELNSDGTDRI) has biased composition (basic and acidic residues). Acidic residues predominate over residues 72-83 (IEEEEEEDDIEN). 3 positions are modified to phosphoserine: serine 112, serine 113, and serine 114. Disordered regions lie at residues 144–201 (GKDP…VKRR), 360–381 (ELDN…TEQA), 422–441 (SHSN…DEKL), 454–526 (QTTK…SGEL), and 556–575 (TNSE…QPGT). Low complexity predominate over residues 156–179 (SSMASSSTRSSQSSQVSAIQPQSQ). A compositionally biased stretch (basic and acidic residues) spans 180-198 (DDNRVSDIRQMENRRELNV). 2 stretches are compositionally biased toward basic and acidic residues: residues 426-441 (HSNE…DEKL) and 489-505 (DAEK…EHHP). Serine 436 carries the phosphoserine modification. The segment covering 506–522 (SITSVNSPFLYSPSKQP) has biased composition (polar residues). A phosphoserine mark is found at serine 618 and serine 856. Disordered regions lie at residues 803–864 (RGSL…ASAD), 940–974 (GEAP…SPAR), and 1005–1024 (KAKS…KESK). Low complexity predominate over residues 826-859 (TLSLKTSTTGLSSHSKSAENNSTQQSTTSPSINS). Polar residues predominate over residues 955-974 (VSTTTKLAKRITQPSLSPAR). Low complexity predominate over residues 1009–1020 (EQSNAKSSSSSI).

The protein resides in the cytoplasm. This is an uncharacterized protein from Schizosaccharomyces pombe (strain 972 / ATCC 24843) (Fission yeast).